The sequence spans 206 residues: Thiamine-phosphate synthase (206 aa).

4-amino-2-methyl-5-(diphosphooxymethyl)pyrimidine contacts are provided by residues 35–39 and N67; that span reads QLRHK. Mg(2+) is bound by residues D68 and D87. S106 lines the 4-amino-2-methyl-5-(diphosphooxymethyl)pyrimidine pocket. 132 to 134 serves as a coordination point for 2-[(2R,5Z)-2-carboxy-4-methylthiazol-5(2H)-ylidene]ethyl phosphate; that stretch reads TGS. Position 135 (K135) interacts with 4-amino-2-methyl-5-(diphosphooxymethyl)pyrimidine. Residue G163 participates in 2-[(2R,5Z)-2-carboxy-4-methylthiazol-5(2H)-ylidene]ethyl phosphate binding.

The protein belongs to the thiamine-phosphate synthase family. It depends on Mg(2+) as a cofactor.

It catalyses the reaction 2-[(2R,5Z)-2-carboxy-4-methylthiazol-5(2H)-ylidene]ethyl phosphate + 4-amino-2-methyl-5-(diphosphooxymethyl)pyrimidine + 2 H(+) = thiamine phosphate + CO2 + diphosphate. The enzyme catalyses 2-(2-carboxy-4-methylthiazol-5-yl)ethyl phosphate + 4-amino-2-methyl-5-(diphosphooxymethyl)pyrimidine + 2 H(+) = thiamine phosphate + CO2 + diphosphate. It carries out the reaction 4-methyl-5-(2-phosphooxyethyl)-thiazole + 4-amino-2-methyl-5-(diphosphooxymethyl)pyrimidine + H(+) = thiamine phosphate + diphosphate. It functions in the pathway cofactor biosynthesis; thiamine diphosphate biosynthesis; thiamine phosphate from 4-amino-2-methyl-5-diphosphomethylpyrimidine and 4-methyl-5-(2-phosphoethyl)-thiazole: step 1/1. Functionally, condenses 4-methyl-5-(beta-hydroxyethyl)thiazole monophosphate (THZ-P) and 2-methyl-4-amino-5-hydroxymethyl pyrimidine pyrophosphate (HMP-PP) to form thiamine monophosphate (TMP). The sequence is that of Thiamine-phosphate synthase from Chlorobium phaeobacteroides (strain DSM 266 / SMG 266 / 2430).